A 118-amino-acid chain; its full sequence is Down syndrome critical region protein 4 (118 aa).

The disordered stretch occupies residues 1-39 (MSLIILTRDDEPRIFTPDSDAASPALHSTSPLPDPASAS). Positions 28–39 (STSPLPDPASAS) are enriched in low complexity.

In terms of tissue distribution, mainly expressed in placenta.

The polypeptide is Down syndrome critical region protein 4 (DSCR4) (Homo sapiens (Human)).